The following is a 310-amino-acid chain: ADP-L-glycero-D-manno-heptose-6-epimerase (310 aa).

NADP(+) contacts are provided by residues 10 to 11, 31 to 32, Lys-38, Lys-53, 75 to 79, and Asn-92; these read FI, DN, and EGACS. Tyr-140 (proton acceptor) is an active-site residue. Lys-144 serves as a coordination point for NADP(+). Asn-169 contacts substrate. NADP(+)-binding residues include Val-170 and Lys-178. Residue Lys-178 is the Proton acceptor of the active site. Substrate contacts are provided by residues Ser-180, His-187, 201–204, Arg-209, and Tyr-272; that span reads FEGS.

It belongs to the NAD(P)-dependent epimerase/dehydratase family. HldD subfamily. In terms of assembly, homopentamer. It depends on NADP(+) as a cofactor.

It catalyses the reaction ADP-D-glycero-beta-D-manno-heptose = ADP-L-glycero-beta-D-manno-heptose. It functions in the pathway nucleotide-sugar biosynthesis; ADP-L-glycero-beta-D-manno-heptose biosynthesis; ADP-L-glycero-beta-D-manno-heptose from D-glycero-beta-D-manno-heptose 7-phosphate: step 4/4. Catalyzes the interconversion between ADP-D-glycero-beta-D-manno-heptose and ADP-L-glycero-beta-D-manno-heptose via an epimerization at carbon 6 of the heptose. The polypeptide is ADP-L-glycero-D-manno-heptose-6-epimerase (Salmonella dublin (strain CT_02021853)).